Reading from the N-terminus, the 277-residue chain is 5'-nucleotidase SurE (277 aa).

4 residues coordinate a divalent metal cation: Asp-14, Asp-15, Ser-46, and Asn-104.

Belongs to the SurE nucleotidase family. The cofactor is a divalent metal cation.

The protein resides in the cytoplasm. The catalysed reaction is a ribonucleoside 5'-phosphate + H2O = a ribonucleoside + phosphate. Its function is as follows. Nucleotidase that shows phosphatase activity on nucleoside 5'-monophosphates. This is 5'-nucleotidase SurE from Picosynechococcus sp. (strain ATCC 27264 / PCC 7002 / PR-6) (Agmenellum quadruplicatum).